Reading from the N-terminus, the 622-residue chain is Palmitoyltransferase ZDHHC17 (622 aa).

Over 1-294 (MADGPDEYDT…LKADKEFRQK (294 aa)) the chain is Cytoplasmic. The segment at 1 to 295 (MADGPDEYDT…KADKEFRQKV (295 aa)) is necessary and sufficient for interaction with DNAJC5 and SNAP25. ANK repeat units lie at residues 41 to 76 (THVD…VRQP), 79 to 108 (ENVT…IVDQ), 113 to 142 (LNST…DPSL), 146 to 175 (EGCS…DVDM), 179 to 209 (NGMT…SVNL), 214 to 243 (HKNT…NVDA), and 247 to 276 (KGES…AKGY). The next 2 membrane-spanning stretches (helical) occupy residues 295–315 (VMLG…DLNI) and 316–336 (DSWL…QFLS). Over 337-347 (KSFFDHSMHSA) the chain is Lumenal. A helical transmembrane segment spans residues 348–368 (LPLGIYLATKFWMYVTWFFWF). The Cytoplasmic portion of the chain corresponds to 369 to 371 (WND). A helical membrane pass occupies residues 372–392 (LSFLSIHLPFLANSVALFYNF). The Lumenal segment spans residues 393-470 (GKSWKSDPGI…GNCVGAGNHR (78 aa)). The DHHC domain occupies 427–477 (IFCSTCLIRKPVRSKHCGVCNRCIAKFDHHCPWVGNCVGAGNHRYFMGYLF). Residue cysteine 457 is the S-palmitoyl cysteine intermediate of the active site. The helical transmembrane segment at 471–491 (YFMGYLFFLLFMICWMIYGCV) threads the bilayer. The Cytoplasmic segment spans residues 492 to 506 (SYWGLHCETTYTKDG). The chain crosses the membrane as a helical span at residues 507-526 (FWTYITQIATCSPWMFWMFL). Topologically, residues 527 to 529 (NSV) are lumenal. The helical transmembrane segment at 530 to 552 (FHFMWVAVLLMCQMYQITCLGIT) threads the bilayer. Residues 553-622 (TNERMNARRY…QISGSGYQLV (70 aa)) lie on the Cytoplasmic side of the membrane.

Belongs to the DHHC palmitoyltransferase family. AKR/ZDHHC17 subfamily. Interacts (via ANK repeats) with numerous proteins (via the consensus sequence motif [VIAP]-[VIT]-x-x-Q-P). Interacts (via ANK repeats) with CLIP3. Interacts (via ANK repeats) with HTT. Interacts (via ANK repeats) with DNAJC5 (via C-terminus). Interacts (via ANK repeats) with MAP6. Interacts (via ANK repeats) with SNAP23. Interacts (via ANK repeats) with SNAP25. Interacts (via ANK repeats) with EVL. Interacts with SPRED1 and SPRED3. Interacts with GPM6A and OPTN. May interact (via ANK repeats) with SPRED2. May interact with NTRK1; may regulate its localization and function. Autopalmitoylated. Autopalmitoylation has a regulatory role in ZDHHC17-mediated Mg(2+) transport.

The protein localises to the golgi apparatus membrane. It localises to the cytoplasmic vesicle membrane. The protein resides in the presynaptic cell membrane. It carries out the reaction L-cysteinyl-[protein] + hexadecanoyl-CoA = S-hexadecanoyl-L-cysteinyl-[protein] + CoA. The enzyme catalyses L-cysteinyl-[protein] + tetradecanoyl-CoA = S-tetradecanoyl-L-cysteinyl-[protein] + CoA. It catalyses the reaction L-cysteinyl-[protein] + octadecanoyl-CoA = S-octadecanoyl-L-cysteinyl-[protein] + CoA. Its function is as follows. Palmitoyltransferase that catalyzes the addition of palmitate onto various protein substrates and is involved in a variety of cellular processes. Has no stringent fatty acid selectivity and in addition to palmitate can also transfer onto target proteins myristate from tetradecanoyl-CoA and stearate from octadecanoyl-CoA. Palmitoyltransferase specific for a subset of neuronal proteins, including SNAP25, DLG4/PSD95, GAD2, SYT1 and HTT. Also palmitoylates neuronal protein GPM6A as well as SPRED1 and SPRED3. Could also play a role in axonogenesis through the regulation of NTRK1 and the downstream ERK1/ERK2 signaling cascade. May be involved in the sorting or targeting of critical proteins involved in the initiating events of endocytosis at the plasma membrane. May play a role in Mg(2+) transport. Could also palmitoylate DNAJC5 and regulate its localization to the Golgi membrane. Palmitoylates CASP6, thereby preventing its dimerization and subsequent activation. This chain is Palmitoyltransferase ZDHHC17, found in Rattus norvegicus (Rat).